The chain runs to 416 residues: Orexin/Hypocretin receptor type 1 (416 aa).

Positions 1-22 (MEPSATPGAQPGVPTSSGEPFH) are disordered. The Extracellular segment spans residues 1 to 46 (MEPSATPGAQPGVPTSSGEPFHLPPDYEDEFLRYLWRDYLYPKQYE). The segment at 26–41 (DYEDEFLRYLWRDYLY) is required for response to orexin-A. Residues 47–67 (WVLIAAYVAVFLIALVGNTLV) form a helical membrane-spanning segment. At 68-82 (CLAVWRNHHMRTVTN) the chain is on the cytoplasmic side. The helical transmembrane segment at 83-105 (YFIVNLSLADVLVTAICLPASLL) threads the bilayer. The Extracellular segment spans residues 106–119 (VDITESWLFGHALC). An intrachain disulfide couples Cys119 to Cys202. A helical membrane pass occupies residues 120-140 (KVIPYLQAVSVSVAVLTLSFI). Topologically, residues 141–160 (ALDRWYAICHPLLFKSTARR) are cytoplasmic. Residues 161-182 (ARGSILGIWAVSLAVMVPQAAV) form a helical membrane-spanning segment. The Extracellular portion of the chain corresponds to 183–213 (MECSSVLPELANRTRLFSVCDERWADELYPK). The N-linked (GlcNAc...) asparagine glycan is linked to Asn194. Residues 214 to 235 (IYHSCFFFVTYLAPLGLMGMAY) traverse the membrane as a helical segment. Residues 236–298 (FQIFRKLWGP…QMRARRKTAK (63 aa)) are Cytoplasmic-facing. A helical transmembrane segment spans residues 299–321 (MLMVVLLVFALCYLPISVLNVLK). Residues 322–336 (RVFGMFRQASDREAV) are Extracellular-facing. The chain crosses the membrane as a helical span at residues 337–360 (YACFTFSHWLVYANSAANPIIYNF). The Cytoplasmic portion of the chain corresponds to 361–416 (LSGKFREQFKAAFSCCLPGLGPSSSARHKSLSLQSRCSVSKVSEHVVLTTVTTVLS).

This sequence belongs to the G-protein coupled receptor 1 family. In terms of tissue distribution, highly expressed in the brain in the prefrontal cortex, hippocampus, paraventricular thalamus, ventromedial hypothalamus, arcuate nucleus, dorsal raphe nucleus, and locus coeruleus. Not detected in the spleen, lung, liver, skeletal muscle, kidney and testis. Orexin receptor mRNA expression has also been reported in the adrenal gland, enteric nervous system, and pancreas.

The protein resides in the cell membrane. Its function is as follows. Moderately selective excitatory receptor for orexin-A and, with a lower affinity, for orexin-B neuropeptide. Triggers an increase in cytoplasmic Ca(2+) levels in response to orexin-A binding. The polypeptide is Orexin/Hypocretin receptor type 1 (Rattus norvegicus (Rat)).